The following is a 971-amino-acid chain: Kinesin-like protein KIN-6 (971 aa).

Disordered regions lie at residues 1–44 (MEEK…SSLA) and 93–121 (TTTT…RNPE). Residues 29–39 (ATPFTTTTKPP) are compositionally biased toward low complexity. The Kinesin motor domain maps to 76-460 (SLKIFLRIKP…LRQASPYMKI (385 aa)). Residue 202–209 (GPSGSGKT) participates in ATP binding. Residues 700–709 (RREAGSEESS) show a composition bias toward basic and acidic residues. 2 disordered regions span residues 700–856 (RREA…TEEM) and 872–917 (KTTN…RLQP). Over residues 768 to 783 (QSVNSEENVGIPSTIT) the composition is skewed to polar residues. Residues 785 to 797 (VEAEVTDFQRDQN) show a composition bias toward basic and acidic residues. Polar residues predominate over residues 809–827 (EVSQDCINSGLSNVQTKSA). Residues 831 to 842 (RFPDSEKQERNR) are compositionally biased toward basic and acidic residues. The span at 903-915 (KKQKNGQKPKRRL) shows a compositional bias: basic residues.

The protein belongs to the TRAFAC class myosin-kinesin ATPase superfamily. Kinesin family. KIN-6 subfamily.

In Arabidopsis thaliana (Mouse-ear cress), this protein is Kinesin-like protein KIN-6.